The primary structure comprises 147 residues: 3-hydroxyacyl-[acyl-carrier-protein] dehydratase FabZ (147 aa).

The active site involves histidine 49.

The protein belongs to the thioester dehydratase family. FabZ subfamily.

It is found in the cytoplasm. The catalysed reaction is a (3R)-hydroxyacyl-[ACP] = a (2E)-enoyl-[ACP] + H2O. Involved in unsaturated fatty acids biosynthesis. Catalyzes the dehydration of short chain beta-hydroxyacyl-ACPs and long chain saturated and unsaturated beta-hydroxyacyl-ACPs. The polypeptide is 3-hydroxyacyl-[acyl-carrier-protein] dehydratase FabZ (Syntrophotalea carbinolica (strain DSM 2380 / NBRC 103641 / GraBd1) (Pelobacter carbinolicus)).